The following is a 155-amino-acid chain: 2-C-methyl-D-erythritol 2,4-cyclodiphosphate synthase (155 aa).

Residues Asp8 and His10 each contribute to the a divalent metal cation site. 4-CDP-2-C-methyl-D-erythritol 2-phosphate-binding positions include 8–10 (DVH) and 34–35 (HS). Residue His42 participates in a divalent metal cation binding. 4-CDP-2-C-methyl-D-erythritol 2-phosphate is bound by residues 56 to 58 (DIG), 61 to 65 (FPDSD), 100 to 106 (AQKPKML), 132 to 135 (TTEE), Phe139, and Lys142.

It belongs to the IspF family. Homotrimer. The cofactor is a divalent metal cation.

It carries out the reaction 4-CDP-2-C-methyl-D-erythritol 2-phosphate = 2-C-methyl-D-erythritol 2,4-cyclic diphosphate + CMP. It functions in the pathway isoprenoid biosynthesis; isopentenyl diphosphate biosynthesis via DXP pathway; isopentenyl diphosphate from 1-deoxy-D-xylulose 5-phosphate: step 4/6. Involved in the biosynthesis of isopentenyl diphosphate (IPP) and dimethylallyl diphosphate (DMAPP), two major building blocks of isoprenoid compounds. Catalyzes the conversion of 4-diphosphocytidyl-2-C-methyl-D-erythritol 2-phosphate (CDP-ME2P) to 2-C-methyl-D-erythritol 2,4-cyclodiphosphate (ME-CPP) with a corresponding release of cytidine 5-monophosphate (CMP). The polypeptide is 2-C-methyl-D-erythritol 2,4-cyclodiphosphate synthase (Clostridium botulinum (strain ATCC 19397 / Type A)).